The sequence spans 113 residues: U11-theraphotoxin-Hhn1s (113 aa).

A signal peptide spans Met1–Ala21. A propeptide spanning residues Asp22–Arg74 is cleaved from the precursor. Positions Glu61–Asp83 are disordered. Intrachain disulfides connect Cys75–Cys90, Cys82–Cys95, and Cys89–Cys110.

It belongs to the neurotoxin 14 (magi-1) family. 01 (HNTX-16) subfamily. Expressed by the venom gland.

The protein localises to the secreted. Functionally, probable ion channel inhibitor. The sequence is that of U11-theraphotoxin-Hhn1s from Cyriopagopus hainanus (Chinese bird spider).